The sequence spans 67 residues: Phycobilisome 7.8 kDa linker polypeptide, allophycocyanin-associated, core (67 aa).

The CpcD-like domain occupies 1 to 56; it reads MRMFRITACLPSPSKIRTQRELQNTFFTKLVPYDAWFREQQRIQKLGGKIIKVELA.

It belongs to the phycobilisome linker protein family.

It localises to the cellular thylakoid membrane. In terms of biological role, rod linker protein, associated with allophycocyanin. Linker polypeptides determine the state of aggregation and the location of the disk-shaped phycobiliprotein units within the phycobilisome and modulate their spectroscopic properties in order to mediate a directed and optimal energy transfer. The chain is Phycobilisome 7.8 kDa linker polypeptide, allophycocyanin-associated, core (apcC) from Synechococcus sp. (strain ATCC 27144 / PCC 6301 / SAUG 1402/1) (Anacystis nidulans).